The sequence spans 519 residues: GMP synthase [glutamine-hydrolyzing] (519 aa).

Residues 4-201 (AILILDFGSQ…VHDICDAGYD (198 aa)) enclose the Glutamine amidotransferase type-1 domain. The active-site Nucleophile is the C81. Catalysis depends on residues H175 and E177. The GMPS ATP-PPase domain occupies 202–394 (WNMPDYVEEA…LGLPRDLVFR (193 aa)). 229 to 235 (SGGVDSS) lines the ATP pocket.

Homodimer.

It catalyses the reaction XMP + L-glutamine + ATP + H2O = GMP + L-glutamate + AMP + diphosphate + 2 H(+). It functions in the pathway purine metabolism; GMP biosynthesis; GMP from XMP (L-Gln route): step 1/1. In terms of biological role, catalyzes the synthesis of GMP from XMP. The sequence is that of GMP synthase [glutamine-hydrolyzing] from Nitrosomonas eutropha (strain DSM 101675 / C91 / Nm57).